The following is a 343-amino-acid chain: Ornithine carbamoyltransferase, catabolic (343 aa).

Residue 62–65 (STRT) participates in carbamoyl phosphate binding. Histidine 79 provides a ligand contact to Ni(2+). Residues glutamine 89, arginine 113, and 140-143 (HPTQ) contribute to the carbamoyl phosphate site. L-ornithine contacts are provided by residues asparagine 172, aspartate 236, and 240–241 (SM). Carbamoyl phosphate contacts are provided by residues 278–279 (CL) and arginine 323.

The protein belongs to the aspartate/ornithine carbamoyltransferase superfamily. OTCase family. Homohexamer; dimer of trimers. The cofactor is Ni(2+).

It is found in the cytoplasm. The catalysed reaction is carbamoyl phosphate + L-ornithine = L-citrulline + phosphate + H(+). It functions in the pathway amino-acid degradation; L-arginine degradation via ADI pathway; carbamoyl phosphate from L-arginine: step 2/2. In terms of biological role, involved in the catabolism of arginine. Catalyzes the phosphorolysis of citrulline, the reverse reaction of the biosynthetic one, yielding ornithine and carbamoyl phosphate which serve to generate ATP from ADP. The protein is Ornithine carbamoyltransferase, catabolic of Lentilactobacillus hilgardii (Lactobacillus hilgardii).